A 328-amino-acid polypeptide reads, in one-letter code: Acyl-CoA wax alcohol acyltransferase 1 (328 aa).

2 helical membrane passes run 12-32 (SLSLLQWPLSYVAMFWIVQPL) and 34-53 (ICLLFTPLWPLPTVYFVWLL).

The protein belongs to the diacylglycerol acyltransferase family.

It localises to the endoplasmic reticulum membrane. It catalyses the reaction a long chain fatty alcohol + a fatty acyl-CoA = a wax ester + CoA. The enzyme catalyses 1,2-di-(9Z-octadecenoyl)-sn-glycerol + (9Z)-octadecenoyl-CoA = 1,2,3-tri-(9Z-octadecenoyl)-glycerol + CoA. The catalysed reaction is hexadecan-1-ol + (9Z)-octadecenoyl-CoA = hexadecanyl (9Z)-octadecenoate + CoA. It carries out the reaction decan-1-ol + (9Z)-octadecenoyl-CoA = 1-O-decyl-(9Z)-octadecenoate + CoA. It catalyses the reaction (9Z)-hexadecen-1-ol + (9Z)-octadecenoyl-CoA = 1-O-(9Z)-hexadecenyl (9Z)-octadecenoate + CoA. The enzyme catalyses octadecan-1-ol + (9Z)-octadecenoyl-CoA = 1-O-octadecyl (9Z)-octadecenoate + CoA. The catalysed reaction is (9Z)-octadecen-1-ol + (9Z)-octadecenoyl-CoA = 1-O-(9Z)-octadecenyl (9Z)-octadecenoate + CoA. It carries out the reaction hexadecan-1-ol + hexadecanoyl-CoA = hexadecanyl hexadecanoate + CoA. It catalyses the reaction hexadecan-1-ol + (9Z)-hexadecenoyl-CoA = 1-O-hexadecyl (9Z)-hexadecenoate + CoA. The enzyme catalyses hexadecan-1-ol + octadecanoyl-CoA = hexadecanyl octadecanoate + CoA. The catalysed reaction is eicosan-1-ol + (9Z)-octadecenoyl-CoA = 1-O-eicosanyl (9Z)-octadecenoate + CoA. In terms of biological role, acyltransferase that catalyzes the formation of ester bonds between fatty alcohols and fatty acyl-CoAs to form wax monoesters. Shows a strong preference for decyl alcohol (C10), with less activity towards C16 and C18 alcohols. Shows a strong preference for saturated acyl-CoAs. The chain is Acyl-CoA wax alcohol acyltransferase 1 (Awat1) from Mus musculus (Mouse).